A 382-amino-acid polypeptide reads, in one-letter code: MNEALNIADQTLVLHRHPRIKNETLQAWDSADEYLINYFSENELQKQLNENEQILLVNDSFGALTCYLQAFQRTVVSDSYLSINSIKLNMQRNRCPEENLLLQDSLQQFPENVKIVLIKIPKTLSYLEEMLQKLHAVITPETIVVAAGKVNMIHNSTLDLFEKYIGTTKTSLAKKKSRLIFSLPIIKEVPEKEIAITWEIEKLDWKIHNHANVFSRNHLDIGGRFLMDNLPKGDFSKVVDLGCGNGIIGMAASAAYPKAQITFIDESYMSIDSARINMQKNLPEEQAENARFVVNNGLVGFKPRSYDLILCNPPFHQQQTITDQIAWSMFNDAHFCLVDNGELVIVGNHHLNYQDKLERIFGNCEIVSQNKKFVILRAVKMD.

This sequence belongs to the methyltransferase superfamily. RlmG family.

It is found in the cytoplasm. The enzyme catalyses guanosine(1835) in 23S rRNA + S-adenosyl-L-methionine = N(2)-methylguanosine(1835) in 23S rRNA + S-adenosyl-L-homocysteine + H(+). Functionally, specifically methylates the guanine in position 1835 (m2G1835) of 23S rRNA. This chain is Ribosomal RNA large subunit methyltransferase G, found in Psychromonas ingrahamii (strain DSM 17664 / CCUG 51855 / 37).